Consider the following 469-residue polypeptide: Protein RUFY3 (469 aa).

2 positions are modified to phosphothreonine: Thr-5 and Thr-12. 2 positions are modified to phosphoserine: Ser-34 and Ser-49. A Phosphothreonine modification is found at Thr-51. Residues 95 to 227 (DSDYAPLQQF…IDANFCMKGE (133 aa)) enclose the RUN domain. Coiled coils occupy residues 271-362 (NRHL…VEKE) and 422-463 (KSEL…AANK).

As to quaternary structure, interacts with PAK1. Interacts (via C-terminus) with Ras-related Rab-5 proteins. Interacts (via C-terminus) with Ras-related Rap-2 proteins. Interacts with PIK3CA and PIK3R1. Interacts (via N-terminus) with FSCN1; this interaction induces neuron axon development. Interacts with DBN1. Interacts (via the second coiled coil) with GTP-, but not GDP-bound ARL8A and ARL8B. Interacts with dynactin/DCTN1 and the dynein intermediate chain DYNC1I1/2. Directly interacts with DYNC1LI1. In terms of processing, phosphorylated by PAK1. Isoform 1 is partially phosphorylated. Overexpressed in gastric cancer cells and tissues (at protein level).

It is found in the cytoplasm. Its subcellular location is the endomembrane system. It localises to the cell projection. The protein localises to the invadopodium. The protein resides in the perikaryon. It is found in the growth cone. Its subcellular location is the filopodium. It localises to the lamellipodium. The protein localises to the lysosome. ARL8 effector that promotes the coupling of endolysosomes to dynein-dynactin for retrograde transport along microtubules. Acts by binding both GTP-bound ARL8 and dynein-dynactin. In nonneuronal cells, promotes concentration of endolysosomes in the juxtanuclear area. In hippocampal neurons, drives retrograde transport of endolysosomes from the axon to the soma. Plays a role in the generation of neuronal polarity formation and axon growth. Implicated in the formation of a single axon by developing neurons. May inhibit the formation of additional axons by inhibition of PI3K in minor neuronal processes. Plays a role in the formation of F-actin-enriched protrusive structures at the cell periphery. Plays a role in cytoskeletal organization by regulating the subcellular localization of FSCN1 and DBN1 at axonal growth cones. In Homo sapiens (Human), this protein is Protein RUFY3.